A 283-amino-acid chain; its full sequence is Cyclin-C (283 aa).

The Cyclin N-terminal domain maps to 46-144; that stretch reads NVIQALGEHL…ILECEFYLLE (99 aa). The tract at residues 252–283 is disordered; that stretch reads SILSKMPKPKPPPNSDGEQGTNGSQSSGYSQS. The span at 267-283 shows a compositional bias: polar residues; the sequence is DGEQGTNGSQSSGYSQS.

It belongs to the cyclin family. Cyclin C subfamily. As to quaternary structure, component of the Mediator complex. The cylin/CDK pair formed by ccnc/cdk8 also associates with the large subunit of RNA polymerase II.

It is found in the nucleus. Functionally, component of the Mediator complex, a coactivator involved in regulated gene transcription of nearly all RNA polymerase II-dependent genes. Mediator functions as a bridge to convey information from gene-specific regulatory proteins to the basal RNA polymerase II transcription machinery. Mediator is recruited to promoters by direct interactions with regulatory proteins and serves as a scaffold for the assembly of a functional preinitiation complex with RNA polymerase II and the general transcription factors. Binds to and activates cyclin-dependent kinase cdk8 that phosphorylates the CTD (C-terminal domain) of the large subunit of RNA polymerase II (RNAp II), which may inhibit the formation of a transcription initiation complex. This Xenopus laevis (African clawed frog) protein is Cyclin-C (ccnc).